Here is a 365-residue protein sequence, read N- to C-terminus: Spore germination protein A2 (365 aa).

11 helical membrane-spanning segments follow: residues 12-32 (TFQG…LTLP), 45-65 (WITL…NTLI), 85-105 (WIGS…ASFE), 122-142 (PIQV…VGGL), 148-168 (LFPF…GISF), 187-207 (IANS…MLFL), 223-243 (LGFL…VGAL), 250-270 (TLIW…IFIE), 275-295 (FLLV…GYFA), 303-323 (FGLS…YFSL), and 338-358 (LGYI…IVAL).

This sequence belongs to the amino acid-polyamine-organocation (APC) superfamily. Spore germination protein (SGP) (TC 2.A.3.9) family.

The protein localises to the cell membrane. Its function is as follows. Involved in the germinative response to L-alanine. Could be an amino acid transporter. Forms a complex at the inner spore membrane which acts as a receptor for L-alanine, thus is involved in the stimulation of germination in response to alanine. Can stimulate germination in the absence of gerD and gerK gene products (fructose and glucose receptors, respectively), but the response is improved in their presence. This is Spore germination protein A2 (gerAB) from Bacillus subtilis (strain 168).